Consider the following 568-residue polypeptide: Proline--tRNA ligase (568 aa).

The protein belongs to the class-II aminoacyl-tRNA synthetase family. ProS type 1 subfamily. In terms of assembly, homodimer.

The protein localises to the cytoplasm. It catalyses the reaction tRNA(Pro) + L-proline + ATP = L-prolyl-tRNA(Pro) + AMP + diphosphate. Functionally, catalyzes the attachment of proline to tRNA(Pro) in a two-step reaction: proline is first activated by ATP to form Pro-AMP and then transferred to the acceptor end of tRNA(Pro). As ProRS can inadvertently accommodate and process non-cognate amino acids such as alanine and cysteine, to avoid such errors it has two additional distinct editing activities against alanine. One activity is designated as 'pretransfer' editing and involves the tRNA(Pro)-independent hydrolysis of activated Ala-AMP. The other activity is designated 'posttransfer' editing and involves deacylation of mischarged Ala-tRNA(Pro). The misacylated Cys-tRNA(Pro) is not edited by ProRS. This Listeria monocytogenes serovar 1/2a (strain ATCC BAA-679 / EGD-e) protein is Proline--tRNA ligase.